The sequence spans 360 residues: Variable large protein 18 (360 aa).

The signal sequence occupies residues 1–26 (MRKRISAIINKLNISIMMMIVVLMIG). C27 carries N-palmitoyl cysteine lipidation. C27 is lipidated: S-diacylglycerol cysteine.

It belongs to the variable large protein (Vlp) family. Alpha subfamily.

The protein localises to the cell outer membrane. In terms of biological role, the Vlp and Vsp proteins are antigenically distinct proteins, only one vlp or vsp gene is transcriptionally active at any one time. Switching between these genes is a mechanism of host immune response evasion. This is Variable large protein 18 from Borrelia hermsii.